The primary structure comprises 165 residues: Lipoprotein signal peptidase (165 aa).

4 consecutive transmembrane segments (helical) span residues 7–27 (FFLL…KYWI), 28–48 (THTM…LYHV), 61–81 (FSHW…FWLW), and 87–107 (DKAL…GNLI). Active-site residues include D117 and D136. The chain crosses the membrane as a helical span at residues 128–148 (SFAIFNLADTFITLGAISILI).

It belongs to the peptidase A8 family.

The protein localises to the cell inner membrane. The enzyme catalyses Release of signal peptides from bacterial membrane prolipoproteins. Hydrolyzes -Xaa-Yaa-Zaa-|-(S,diacylglyceryl)Cys-, in which Xaa is hydrophobic (preferably Leu), and Yaa (Ala or Ser) and Zaa (Gly or Ala) have small, neutral side chains.. It functions in the pathway protein modification; lipoprotein biosynthesis (signal peptide cleavage). In terms of biological role, this protein specifically catalyzes the removal of signal peptides from prolipoproteins. This chain is Lipoprotein signal peptidase, found in Bartonella bacilliformis (strain ATCC 35685 / KC583 / Herrer 020/F12,63).